A 321-amino-acid chain; its full sequence is Lipoyl synthase (321 aa).

[4Fe-4S] cluster is bound by residues cysteine 68, cysteine 73, cysteine 79, cysteine 94, cysteine 98, cysteine 101, and serine 308. Residues 80–297 form the Radical SAM core domain; that stretch reads FNHGTATFMI…KEQALAMGFT (218 aa).

This sequence belongs to the radical SAM superfamily. Lipoyl synthase family. [4Fe-4S] cluster serves as cofactor.

The protein localises to the cytoplasm. It carries out the reaction [[Fe-S] cluster scaffold protein carrying a second [4Fe-4S](2+) cluster] + N(6)-octanoyl-L-lysyl-[protein] + 2 oxidized [2Fe-2S]-[ferredoxin] + 2 S-adenosyl-L-methionine + 4 H(+) = [[Fe-S] cluster scaffold protein] + N(6)-[(R)-dihydrolipoyl]-L-lysyl-[protein] + 4 Fe(3+) + 2 hydrogen sulfide + 2 5'-deoxyadenosine + 2 L-methionine + 2 reduced [2Fe-2S]-[ferredoxin]. The protein operates within protein modification; protein lipoylation via endogenous pathway; protein N(6)-(lipoyl)lysine from octanoyl-[acyl-carrier-protein]: step 2/2. Catalyzes the radical-mediated insertion of two sulfur atoms into the C-6 and C-8 positions of the octanoyl moiety bound to the lipoyl domains of lipoate-dependent enzymes, thereby converting the octanoylated domains into lipoylated derivatives. In Proteus mirabilis (strain HI4320), this protein is Lipoyl synthase.